A 420-amino-acid chain; its full sequence is 3-phosphoshikimate 1-carboxyvinyltransferase (420 aa).

K20, S21, and R25 together coordinate 3-phosphoshikimate. K20 is a binding site for phosphoenolpyruvate. R119 provides a ligand contact to phosphoenolpyruvate. Residues S161, S162, Q163, S189, D303, Q326, and K330 each contribute to the 3-phosphoshikimate site. Q163 lines the phosphoenolpyruvate pocket. D303 functions as the Proton acceptor in the catalytic mechanism. R334, R375, and K400 together coordinate phosphoenolpyruvate.

The protein belongs to the EPSP synthase family. Monomer.

It localises to the cytoplasm. The enzyme catalyses 3-phosphoshikimate + phosphoenolpyruvate = 5-O-(1-carboxyvinyl)-3-phosphoshikimate + phosphate. It participates in metabolic intermediate biosynthesis; chorismate biosynthesis; chorismate from D-erythrose 4-phosphate and phosphoenolpyruvate: step 6/7. Its function is as follows. Catalyzes the transfer of the enolpyruvyl moiety of phosphoenolpyruvate (PEP) to the 5-hydroxyl of shikimate-3-phosphate (S3P) to produce enolpyruvyl shikimate-3-phosphate and inorganic phosphate. This Dehalococcoides mccartyi (strain ATCC BAA-2266 / KCTC 15142 / 195) (Dehalococcoides ethenogenes (strain 195)) protein is 3-phosphoshikimate 1-carboxyvinyltransferase.